The chain runs to 582 residues: BTB/POZ domain and ankyrin repeat-containing protein NPR1 (582 aa).

Positions 1 to 12 (MEPPTSHVTNAF) are enriched in polar residues. The interval 1–27 (MEPPTSHVTNAFSDSDSASVEEGDADA) is disordered. In terms of domain architecture, BTB spans 55 to 140 (ADARIAVPGG…VLDYLYSGRV (86 aa)). Residues 147–161 (ACLCVDEDCAHVGCH) form a C2HC NPR-type zinc finger. Zn(2+)-binding residues include Cys-150, Cys-155, His-157, and Cys-160. 4 ANK repeats span residues 229 to 258 (RSNLDMITLEKSLPPDVIKQIIDARLSLGL), 269 to 299 (KHVRRIHRALDSDDVELVRMLLTEGQTNLDD), 301 to 328 (FALHYAVEHCDSKITTELLDLALADVNH), and 332 to 361 (RGYTVLHIAARRREPKIIVSLLTKGARPAD). Positions 391–526 (PSPKDRLCIE…VLDKIMDDET (136 aa)) are salicylic acid-binding core (SBC). Arg-436 provides a ligand contact to salicylate. 2 disordered regions span residues 525–544 (ETDPVSLGRDTSAEKRKRFH) and 551–582 (QKAFHEDKEENDRSGLSSSSSSTSIGAIRPRR). The span at 553–563 (AFHEDKEENDR) shows a compositional bias: basic and acidic residues. A compositionally biased stretch (low complexity) spans 564–574 (SGLSSSSSSTS).

The protein belongs to the plant 'ANKYRIN-BTB/POZ' family. 'NPR1-like' subfamily. In terms of assembly, oligomer in an uninduced state; disulfide-linked. Forms activated monomer upon changes in cellular redox potential. Interacts with TGA2.2. Interacts with NRR.

The protein localises to the cytoplasm. Its subcellular location is the nucleus. It localises to the nuclear body. It participates in protein modification; protein ubiquitination. Salicylic acid (SA)-binding substrate-specific adapter of an E3 ubiquitin-protein ligase complex (CUL3-RBX1-BTB) which mediates the ubiquitination and subsequent proteasomal degradation of target proteins. Transcription cofactor that represses gene expression in the absence of salicylic acid (SA), when attached to negative cis-elements (W-box) with WRKY transcription factors, but stimulates gene expression upon activation by SA, when sumoylated and attached to positive cis-elements (as-1) with TGA transcription factors, thus confering immunity through a series of gene regulations ending in a significant increase in antimicrobial and defense genes expression. Key positive factor of disease resistance. Involved in defense response against the bacterial blight disease caused by Xanthomonas oryzae pv. oryzae (Xoo). Plants over-expressing NPR1/NH1 acquire high levels of resistance to Xoo, express constitutively defense genes and develop lesion-mimic spots on leaves at pre-flowering stage. Involved in basal resistance to the blast pathogen Magnaporthe oryzae. Plants over-expressing NPR1/NH1 have increased resistance to M.oryzae infection. Plays an essential role in benzothiadiazole (BTH)-induced resistance to the blast fungus disease caused by Magnaporthe oryzae. Functions as a transcriptional coactivator of TGA2.1 and LG2 in vitro. Involved in defense response against herbivore. Plants silencing NPR1/NH1 have increased herbivore-induced trypsin proteinase inhibitors and volatiles, which reduces the performance of the striped stem borer (SSB) Chilo suppressalis. This chain is BTB/POZ domain and ankyrin repeat-containing protein NPR1, found in Oryza sativa subsp. indica (Rice).